Consider the following 343-residue polypeptide: Anthranilate 1,2-dioxygenase electron transfer component (343 aa).

Positions 3–96 (HSVALNFADG…NAAFYFDHHS (94 aa)) constitute a 2Fe-2S ferredoxin-type domain. [2Fe-2S] cluster contacts are provided by cysteine 40, cysteine 45, cysteine 48, and cysteine 80. Positions 98-338 (ICNAGETLKI…HIYSEKFLQS (241 aa)) are ferredoxin-reductase. The 104-residue stretch at 103 to 206 (ETLKIATVVT…EAPLGSFYLR (104 aa)) folds into the FAD-binding FR-type domain.

It belongs to the bacterial ring-hydroxylating dioxygenase ferredoxin reductase family. As to quaternary structure, monomer. It is part of the anthranilate dioxygenase two component enzyme system. The other component is an oxygenase component consisting of 3 large (AntA) and 3 small (AntB) subunits. The cofactor is FAD. [2Fe-2S] cluster is required as a cofactor.

It catalyses the reaction 2 reduced [2Fe-2S]-[ferredoxin] + NAD(+) + H(+) = 2 oxidized [2Fe-2S]-[ferredoxin] + NADH. The protein operates within aromatic compound metabolism; anthranilate degradation via hydroxylation; catechol from anthranilate: step 1/1. Electron transfer component of anthranilate 1,2-dioxygenase system. This Acinetobacter baylyi (strain ATCC 33305 / BD413 / ADP1) protein is Anthranilate 1,2-dioxygenase electron transfer component.